The chain runs to 406 residues: Methylthioribose-1-phosphate isomerase (406 aa).

Catalysis depends on D277, which acts as the Proton donor.

The protein belongs to the eIF-2B alpha/beta/delta subunits family. MtnA subfamily.

The protein localises to the cytoplasm. It localises to the nucleus. It carries out the reaction 5-(methylsulfanyl)-alpha-D-ribose 1-phosphate = 5-(methylsulfanyl)-D-ribulose 1-phosphate. Its pathway is amino-acid biosynthesis; L-methionine biosynthesis via salvage pathway; L-methionine from S-methyl-5-thio-alpha-D-ribose 1-phosphate: step 1/6. Functionally, catalyzes the interconversion of methylthioribose-1-phosphate (MTR-1-P) into methylthioribulose-1-phosphate (MTRu-1-P). The chain is Methylthioribose-1-phosphate isomerase from Debaryomyces hansenii (strain ATCC 36239 / CBS 767 / BCRC 21394 / JCM 1990 / NBRC 0083 / IGC 2968) (Yeast).